The chain runs to 114 residues: UPF0145 protein STK_10800 (114 aa).

It belongs to the UPF0145 family.

The chain is UPF0145 protein STK_10800 from Sulfurisphaera tokodaii (strain DSM 16993 / JCM 10545 / NBRC 100140 / 7) (Sulfolobus tokodaii).